Consider the following 388-residue polypeptide: Flavin-dependent monooxygenase (388 aa).

FAD-binding positions include 12-15, 34-36, 44-47, arginine 105, tyrosine 267, aspartate 289, and 296-302; these read VGVA, EKS, QALD, and PLSGQGN.

This sequence belongs to the aromatic-ring hydroxylase family. FAD serves as cofactor.

It catalyses the reaction a tetracycline + NADPH + O2 + H(+) = a (1S,10aS)-3-(CONH2)-1-(Me2N)-3,3a,4,6-(HO)4-2,5-dioxo-1H,10aH,11H,11aH-cyclopenta[b]anthracene + CO + NADP(+) + H2O. It carries out the reaction 7-chlorotetracycline + NADPH + O2 + H(+) = (1S,10S,10aS)-3-(CONH2)-9-Cl-1-(Me2N)-3,3a,4,10-(HO)4-10-Me-2,5-dioxo-1H,10aH,11H,11aH-cyclopenta[b]anthracen-6-olate + CO + NADP(+) + H2O. Inhibited by anhydrotetracycline. Functionally, an FAD-requiring monooxygenase active on tetracycline antibiotic and some of its derivatives, which leads to their inactivation. Expression in E.coli confers high resistance to tetracycline and oxytetracycline, does not confer resistance to minocycline or tigecycline. Degrades tetracycline and oxytetracycline; the reaction requires NADPH. Degrades and confers resistance to chlortetracycline. This is Flavin-dependent monooxygenase (tet(50)) from Unknown prokaryotic organism.